We begin with the raw amino-acid sequence, 230 residues long: Ureidoacrylate amidohydrolase RutB (230 aa).

The Proton acceptor role is filled by aspartate 24. Lysine 133 is a catalytic residue. Cysteine 166 serves as the catalytic Nucleophile.

It belongs to the isochorismatase family. RutB subfamily.

It carries out the reaction (Z)-3-ureidoacrylate + H2O + H(+) = (Z)-3-aminoacrylate + NH4(+) + CO2. The catalysed reaction is (Z)-3-ureidoacrylate + H2O = (Z)-3-aminoacrylate + carbamate + H(+). The enzyme catalyses (Z)-2-methylureidoacrylate + H2O + H(+) = (Z)-2-methylaminoacrylate + NH4(+) + CO2. In terms of biological role, hydrolyzes ureidoacrylate to form aminoacrylate and carbamate. The carbamate hydrolyzes spontaneously, thereby releasing one of the nitrogen atoms of the pyrimidine ring as ammonia and one of its carbon atoms as CO2. In Escherichia coli O7:K1 (strain IAI39 / ExPEC), this protein is Ureidoacrylate amidohydrolase RutB.